A 459-amino-acid polypeptide reads, in one-letter code: Putative BTB/POZ domain-containing protein R541 (459 aa).

The 68-residue stretch at 76–143 (NHITINVGGK…NQKSTNIELY (68 aa)) folds into the BTB domain.

The protein belongs to the mimivirus BTB/WD family.

This Acanthamoeba polyphaga mimivirus (APMV) protein is Putative BTB/POZ domain-containing protein R541.